An 84-amino-acid polypeptide reads, in one-letter code: UPF0297 protein NT01CX_2279 (84 aa).

The protein belongs to the UPF0297 family.

This chain is UPF0297 protein NT01CX_2279, found in Clostridium novyi (strain NT).